A 441-amino-acid polypeptide reads, in one-letter code: Glutamyl-tRNA reductase (441 aa).

Substrate is bound by residues 47 to 50 (TCNR), serine 110, 115 to 117 (ERE), and glutamine 121. Cysteine 48 serves as the catalytic Nucleophile. 192–197 (GTGAYA) contributes to the NADP(+) binding site.

Belongs to the glutamyl-tRNA reductase family. As to quaternary structure, homodimer.

The enzyme catalyses (S)-4-amino-5-oxopentanoate + tRNA(Glu) + NADP(+) = L-glutamyl-tRNA(Glu) + NADPH + H(+). It participates in porphyrin-containing compound metabolism; protoporphyrin-IX biosynthesis; 5-aminolevulinate from L-glutamyl-tRNA(Glu): step 1/2. In terms of biological role, catalyzes the NADPH-dependent reduction of glutamyl-tRNA(Glu) to glutamate 1-semialdehyde (GSA). The chain is Glutamyl-tRNA reductase from Pseudarthrobacter chlorophenolicus (strain ATCC 700700 / DSM 12829 / CIP 107037 / JCM 12360 / KCTC 9906 / NCIMB 13794 / A6) (Arthrobacter chlorophenolicus).